A 694-amino-acid polypeptide reads, in one-letter code: DNA ligase (694 aa).

Residues 41 to 45 (DAEFD), 91 to 92 (SL), and Glu121 contribute to the NAD(+) site. Residue Lys123 is the N6-AMP-lysine intermediate of the active site. Arg144, Glu184, Lys300, and Lys324 together coordinate NAD(+). The Zn(2+) site is built by Cys418, Cys421, Cys437, and Cys443. The 88-residue stretch at 607 to 694 (SVLPTCEGLT…QGPPVQQVVD (88 aa)) folds into the BRCT domain.

It belongs to the NAD-dependent DNA ligase family. LigA subfamily. Mg(2+) serves as cofactor. It depends on Mn(2+) as a cofactor.

It catalyses the reaction NAD(+) + (deoxyribonucleotide)n-3'-hydroxyl + 5'-phospho-(deoxyribonucleotide)m = (deoxyribonucleotide)n+m + AMP + beta-nicotinamide D-nucleotide.. In terms of biological role, DNA ligase that catalyzes the formation of phosphodiester linkages between 5'-phosphoryl and 3'-hydroxyl groups in double-stranded DNA using NAD as a coenzyme and as the energy source for the reaction. It is essential for DNA replication and repair of damaged DNA. The protein is DNA ligase of Mycobacterium leprae (strain TN).